A 156-amino-acid chain; its full sequence is Large ribosomal subunit protein uL22 (156 aa).

Belongs to the universal ribosomal protein uL22 family. Part of the 50S ribosomal subunit.

Its function is as follows. This protein binds specifically to 23S rRNA. It makes multiple contacts with different domains of the 23S rRNA in the assembled 50S subunit and ribosome. The globular domain of the protein is located near the polypeptide exit tunnel on the outside of the subunit, while an extended beta-hairpin is found that lines the wall of the exit tunnel in the center of the 70S ribosome. The protein is Large ribosomal subunit protein uL22 of Halobacterium salinarum (strain ATCC 700922 / JCM 11081 / NRC-1) (Halobacterium halobium).